The primary structure comprises 466 residues: Catalase ifgD (466 aa).

Residues 1–22 (MAPNYAKKCPVMGKAPSSGHSS) are disordered. Residue His48 is part of the active site. Tyr337 serves as a coordination point for heme.

The protein belongs to the catalase family. Heme is required as a cofactor.

It functions in the pathway alkaloid biosynthesis; ergot alkaloid biosynthesis. Functionally, catalase; part of the gene cluster that mediates the biosynthesis of isofumigaclavines, fungal ergot alkaloids. The tryptophan dimethylallyltransferase ifgA catalyzes the first step of ergot alkaloid biosynthesis by condensing dimethylallyl diphosphate (DMAP) and tryptophan to form 4-dimethylallyl-L-tryptophan. The second step is catalyzed by the methyltransferase ifgB that methylates 4-dimethylallyl-L-tryptophan in the presence of S-adenosyl-L-methionine, resulting in the formation of N-methyl-dimethylallyl-L-tryptophan. The catalase ifgD and the FAD-dependent oxidoreductase ifgC then transform N-methyl-dimethylallyl-L-tryptophan to chanoclavine-I which is further oxidized by ifgE in the presence of NAD(+), resulting in the formation of chanoclavine-I aldehyde. The chanoclavine-I aldehyde reductases ifgG and/or fgaOx3 reduce chanoclavine-I aldehyde to dihydrochanoclavine-I aldehyde that spontaneously dehydrates to form 6,8-dimethyl-6,7-didehydroergoline. The festuclavine dehydrogenases ifgF1 and/or ifgF2 then catalyze the reduction of 6,8-dimethyl-6,7-didehydroergoline to form festuclavine. Hydrolysis of festuclavine by a yet undetermined cytochrome P450 monooxygenase (called ifgH) then leads to the formation of isofumigaclavine B which is in turn acetylated by ifgI to isofumigaclavine A. Penicillium roqueforti has interestingly at least two sets of genes for the consumption of chanoclavine-I aldehyde on three different loci, the OYEs ifgG/fgaOx3 and the festuclavine synthase homologs ifgF1/ifgF2. The reason for the duplication of these genes is unclear, probably to ensure the conversion of chanoclavine-I aldehyde by differential gene expression under various environmental conditions. The sequence is that of Catalase ifgD from Penicillium roqueforti (strain FM164).